The chain runs to 241 residues: Uridylate kinase (241 aa).

ATP is bound by residues 15-18 (KLSG), G58, and R62. UMP is bound by residues D77 and 138 to 145 (TGNPYFTT). Residues T165, Y171, and D174 each coordinate ATP.

The protein belongs to the UMP kinase family. In terms of assembly, homohexamer.

It is found in the cytoplasm. It carries out the reaction UMP + ATP = UDP + ADP. It participates in pyrimidine metabolism; CTP biosynthesis via de novo pathway; UDP from UMP (UMPK route): step 1/1. Its activity is regulated as follows. Inhibited by UTP. In terms of biological role, catalyzes the reversible phosphorylation of UMP to UDP. This chain is Uridylate kinase, found in Desulfotalea psychrophila (strain LSv54 / DSM 12343).